The chain runs to 358 residues: 3-dehydroquinate synthase (358 aa).

NAD(+) contacts are provided by residues 70–75 (DGEQFK), 104–108 (GVIGD), 128–129 (TT), Lys-141, Lys-150, and 168–171 (CLHT). 3 residues coordinate Zn(2+): Glu-183, His-246, and His-263.

This sequence belongs to the sugar phosphate cyclases superfamily. Dehydroquinate synthase family. The cofactor is Co(2+). Requires Zn(2+) as cofactor. NAD(+) is required as a cofactor.

The protein resides in the cytoplasm. The enzyme catalyses 7-phospho-2-dehydro-3-deoxy-D-arabino-heptonate = 3-dehydroquinate + phosphate. The protein operates within metabolic intermediate biosynthesis; chorismate biosynthesis; chorismate from D-erythrose 4-phosphate and phosphoenolpyruvate: step 2/7. Catalyzes the conversion of 3-deoxy-D-arabino-heptulosonate 7-phosphate (DAHP) to dehydroquinate (DHQ). This chain is 3-dehydroquinate synthase, found in Shewanella baltica (strain OS195).